Here is a 991-residue protein sequence, read N- to C-terminus: Polyribonucleotide nucleotidyltransferase 2, mitochondrial (991 aa).

Residues 1–39 constitute a mitochondrion transit peptide; the sequence is MSSIVNRASSASLPNFLAWRALGFRTICSGRLGFAPSVP. Residues 609–667 enclose the KH domain; it reads PRLATLKYSNDSLRTLIGPMGVLKRKIEVETGARLSIDNGTLTIVAKNQDVMEKAQEQV. The S1 motif 1 domain maps to 678–746; that stretch reads GGVYKGTVSS…VRGNIKLSRK (69 aa). Residues 813–865 form a disordered region; sequence EAEKSSPVNDNDKPRRAATSKPDRKPKSTASKLIATQKEEEALESIAPEETSA. Basic and acidic residues predominate over residues 822-838; that stretch reads DNDKPRRAATSKPDRKP. The S1 motif 2 domain maps to 925-987; it reads GTEMTATVDH…GVPVMALVDE (63 aa).

It belongs to the polyribonucleotide nucleotidyltransferase family.

It is found in the mitochondrion. It carries out the reaction RNA(n+1) + phosphate = RNA(n) + a ribonucleoside 5'-diphosphate. Involved in the 3'-end maturation of mitochondrial mRNAs, rRNAs and tRNAs. Functions as a poly(A) mRNA 3'-5' degrading phosphorylase and is required for the degradation of highly expressed transcripts of non-coding regions. The protein is Polyribonucleotide nucleotidyltransferase 2, mitochondrial (PNP2) of Arabidopsis thaliana (Mouse-ear cress).